Consider the following 901-residue polypeptide: Probable dipeptidyl-aminopeptidase B (901 aa).

A compositionally biased stretch (low complexity) spans 1–22 (MSSPRPSTSSTSSDSGLSVDTT). A disordered region spans residues 1–67 (MSSPRPSTSS…EPFLPSAKKQ (67 aa)). The Cytoplasmic portion of the chain corresponds to 1–76 (MSSPRPSTSS…QAASGSRTSR (76 aa)). The helical; Signal-anchor for type II membrane protein transmembrane segment at 77-97 (LIWGLVILCVAGWLWGLVLFV) threads the bilayer. Residues 98–901 (TQNRSAQQSV…VKRSLPMLVK (804 aa)) lie on the Vacuolar side of the membrane. Residues Asn334 and Asn625 are each glycosylated (N-linked (GlcNAc...) asparagine). The Charge relay system role is filled by Ser739. N-linked (GlcNAc...) asparagine glycosylation occurs at Asn793. Catalysis depends on charge relay system residues Asp816 and His849.

This sequence belongs to the peptidase S9B family.

The protein localises to the vacuole membrane. The catalysed reaction is Release of an N-terminal dipeptide, Xaa-Yaa-|-Zaa-, from a polypeptide, preferentially when Yaa is Pro, provided Zaa is neither Pro nor hydroxyproline.. Functionally, type IV dipeptidyl-peptidase which removes N-terminal dipeptides sequentially from polypeptides having unsubstituted N-termini provided that the penultimate residue is proline. This Aspergillus niger (strain ATCC MYA-4892 / CBS 513.88 / FGSC A1513) protein is Probable dipeptidyl-aminopeptidase B (dapB).